We begin with the raw amino-acid sequence, 322 residues long: tRNA (guanine-N(7)-)-methyltransferase (322 aa).

Positions 29, 55, and 105 each coordinate S-adenosyl-L-methionine. The active site involves Asp-105. Substrate contacts are provided by Lys-109 and Asp-141.

The protein belongs to the class I-like SAM-binding methyltransferase superfamily. TrmB family.

It carries out the reaction guanosine(46) in tRNA + S-adenosyl-L-methionine = N(7)-methylguanosine(46) in tRNA + S-adenosyl-L-homocysteine. The protein operates within tRNA modification; N(7)-methylguanine-tRNA biosynthesis. Catalyzes the formation of N(7)-methylguanine at position 46 (m7G46) in tRNA. The protein is tRNA (guanine-N(7)-)-methyltransferase of Deinococcus radiodurans (strain ATCC 13939 / DSM 20539 / JCM 16871 / CCUG 27074 / LMG 4051 / NBRC 15346 / NCIMB 9279 / VKM B-1422 / R1).